The chain runs to 490 residues: Costunolide synthase (490 aa).

A helical; Signal-anchor for type II membrane protein membrane pass occupies residues 3 to 23; the sequence is PLTIVSLAVASFLLFAFWALS. 2 N-linked (GlcNAc...) asparagine glycosylation sites follow: Asn-167 and Asn-255. Residue Cys-432 coordinates heme.

The protein belongs to the cytochrome P450 family. Heme is required as a cofactor.

It localises to the membrane. It carries out the reaction germacra-1(10),4,11(13)-trien-12-oate + reduced [NADPH--hemoprotein reductase] + O2 = (+)-costunolide + oxidized [NADPH--hemoprotein reductase] + 2 H2O. It participates in secondary metabolite biosynthesis; terpenoid biosynthesis. In terms of biological role, involved in the biosynthesis of germacrene-derived sesquiterpene lactones. Component of the parthenolide biosynthetic pathway; parthenolide and conjugates are promising anti-cancer drugs highly active against colon cancer cells. Hydroxylates germacrene A acid to 6-alpha-hydroxy-germacrne A acid, a precursor of sesquiterpene lactones that spontaneously undergoes a lactonization which yields costunolide. This Lactuca sativa (Garden lettuce) protein is Costunolide synthase.